The sequence spans 192 residues: CASP-like protein 1E1 (192 aa).

The disordered stretch occupies residues 1–22 (MDSQNKNSVDAMDGIESRGMKE). Topologically, residues 1–29 (MDSQNKNSVDAMDGIESRGMKERGGRTNS) are cytoplasmic. The chain crosses the membrane as a helical span at residues 30–50 (FLVLRVLAFVLTSTAAIVHGV). Residues 51–81 (NNQTETVPIQLTSSMPPLYVPVVAKWHYLSA) are Extracellular-facing. N52 carries N-linked (GlcNAc...) asparagine glycosylation. A helical transmembrane segment spans residues 82 to 102 (FVFFVVSNAIACSYAAISVML). The Cytoplasmic portion of the chain corresponds to 103-118 (SFCGKKSMVPIILTLD). Residues 119 to 139 (LLMVALLFSSNGAATAIGVMG) traverse the membrane as a helical segment. Residues 140-161 (YKGNSHVKWNKVCNVFGKFCNQ) lie on the Extracellular side of the membrane. A helical transmembrane segment spans residues 162-182 (VAASVVLSLIGSIVFVLLVML). Residues 183–192 (TAFRLHNKSK) are Cytoplasmic-facing.

It belongs to the Casparian strip membrane proteins (CASP) family. In terms of assembly, homodimer and heterodimers.

It is found in the cell membrane. The polypeptide is CASP-like protein 1E1 (Ricinus communis (Castor bean)).